We begin with the raw amino-acid sequence, 292 residues long: Zinc finger protein OZF (292 aa).

10 consecutive C2H2-type zinc fingers follow at residues 16–38 (FACK…EHFH), 44–66 (FECN…QNTH), 72–94 (LECN…QKIH), 100–122 (FECK…QRTH), 128–150 (FICK…EKIH), 156–178 (FKCN…QNIH), 184–206 (YECN…VRIH), 212–234 (YECN…VRSH), 240–262 (YGCN…LRIH), and 268–290 (YQCS…QKIH). Glycyl lysine isopeptide (Lys-Gly) (interchain with G-Cter in SUMO2) cross-links involve residues lysine 28, lysine 51, and lysine 56. Residues lysine 157 and lysine 169 each participate in a glycyl lysine isopeptide (Lys-Gly) (interchain with G-Cter in SUMO) cross-link. Residue lysine 173 forms a Glycyl lysine isopeptide (Lys-Gly) (interchain with G-Cter in SUMO2) linkage. The tract at residues 212-292 (YECNVCGKAF…HIRHQKIHTH (81 aa)) is interaction with TERF2IP.

It belongs to the krueppel C2H2-type zinc-finger protein family. In terms of assembly, binds DNA. Interacts with SUMO conjugating enzyme UBC9/UBE2I. Interacts with the telomeric protein TERF2IP.

It is found in the nucleus. The protein is Zinc finger protein OZF (ZNF146) of Bos taurus (Bovine).